A 969-amino-acid chain; its full sequence is GATOR2 complex protein Wdr59 (969 aa).

Residues 1–24 (MPPTETLRPGERGTAGGPGAGAPE) form a disordered region. 5 WD repeats span residues 127–167 (GHTR…KPAL), 172–211 (VCMS…CPTH), 215–255 (AHLN…RAEK), 258–303 (TTMS…DPIC), and 307–351 (GHTD…LKLC). T373 carries the phosphothreonine modification. Positions 435–538 (HEFSLLNTNM…RALVAAMKKK (104 aa)) constitute an RWD domain. A C4-type zinc finger spans residues 891–911 (ECRKCAKPKRTPKCEPCKRPV). Zn(2+) contacts are provided by C892, C895, C904, C907, C917, C928, H933, H936, H939, C950, C953, C955, and C957. The RING-type; atypical zinc finger occupies 912-960 (LFCVLCRLPVKGAANACLACGHGGHIDHMMQWFEKHNVCATCGCKCLER).

It belongs to the WD repeat WDR59 family. Component of the GATOR complex consisting of mio, Nup44A/Seh1, Im11, Nplr3, Nplr2, Wdr24, Wdr59 and Sec13. Within the GATOR complex, probable component of the GATOR2 subcomplex which is likely composed of mio, Nup44A/Seh1, Wdr24, Wdr59 and Sec13. The GATOR2 complex associates with unmet in the absence of S-adenosyl-L-methionine; the mio-Wdr24-Nup44A subcomplex is essential and sufficient for this interaction while Wdr59 and Sec13 are dispensable. This association acts as a nutrient sensor to inhibit mTORC1 signaling in the absence of methionine.

The protein resides in the lysosome membrane. Its function is as follows. A component of the GATOR complex, which functions as a regulator of the amino acid-sensing branch of the mTORC1 signaling pathway. The two GATOR subcomplexes, GATOR1 and GATOR2, regulate the mTORC1 pathway in order to mediate metabolic homeostasis, female gametogenesis and the response to amino acid limitation and complete starvation. GATOR2 activates the mTORC1 signaling pathway through the inhibition of the GATOR1 subcomplex, controlling the switch to cell proliferation and growth under nutrient replete conditions and during female oocyte development. Acts as an atypical component of the GATOR2 subcomplex, which can either promote or inhibit mTORC1 signaling, depending on tissues: inhibits mTORC1 activity by preventing the activity of GATOR2 in the ovary and the eye imaginal disk brain, while it promotes mTORC1 activity in the fat body. The protein is GATOR2 complex protein Wdr59 of Drosophila melanogaster (Fruit fly).